A 145-amino-acid chain; its full sequence is Bacilliredoxin BLi02578/BL01507 (145 aa).

The protein belongs to the bacilliredoxin family.

This Bacillus licheniformis (strain ATCC 14580 / DSM 13 / JCM 2505 / CCUG 7422 / NBRC 12200 / NCIMB 9375 / NCTC 10341 / NRRL NRS-1264 / Gibson 46) protein is Bacilliredoxin BLi02578/BL01507.